The chain runs to 201 residues: MFEQNDDRDRGQVGIGTLIVFIAMVLVAAIAAGVLINTAGMLQTQAEATGEESTDQVSDRLDIVSVSGDVDDPDDPTQINNISMVTATAPGSDPVDLNQTTAQFIGEGGEEMFNLSHEGVFINSIQGVSDEPDNNVLTESSDRAEVVFELDGAPGSYDIGYEALDESERLTVILTTDAGASTEQEIRVPSTFIEDEESVRL.

The propeptide occupies 1-11; it reads MFEQNDDRDRG.

It belongs to the archaeal flagellin family.

It localises to the archaeal flagellum. Flagellin is the subunit protein which polymerizes to form the filaments of archaeal flagella. This Natrialba magadii (strain ATCC 43099 / DSM 3394 / CCM 3739 / CIP 104546 / IAM 13178 / JCM 8861 / NBRC 102185 / NCIMB 2190 / MS3) (Natronobacterium magadii) protein is Flagellin B1 (flaB1).